A 292-amino-acid polypeptide reads, in one-letter code: Elongation factor Ts (292 aa).

Residues 80–83 (TDFV) are involved in Mg(2+) ion dislocation from EF-Tu.

The protein belongs to the EF-Ts family.

The protein resides in the cytoplasm. Associates with the EF-Tu.GDP complex and induces the exchange of GDP to GTP. It remains bound to the aminoacyl-tRNA.EF-Tu.GTP complex up to the GTP hydrolysis stage on the ribosome. The sequence is that of Elongation factor Ts from Limosilactobacillus fermentum (strain NBRC 3956 / LMG 18251) (Lactobacillus fermentum).